Consider the following 152-residue polypeptide: Transcriptional regulator MraZ (152 aa).

SpoVT-AbrB domains are found at residues 5 to 52 (ASAI…PLHE) and 81 to 124 (AQDC…EESA).

This sequence belongs to the MraZ family. Forms oligomers.

Its subcellular location is the cytoplasm. It is found in the nucleoid. This Shewanella frigidimarina (strain NCIMB 400) protein is Transcriptional regulator MraZ.